We begin with the raw amino-acid sequence, 470 residues long: UDP-glycosyltransferase 75C1 (470 aa).

H16 acts as the Proton acceptor in catalysis. H16 serves as a coordination point for an anthocyanidin. UDP-alpha-D-glucose is bound by residues Q347, H362, W365, N366, S367, E370, D386, and Q387.

This sequence belongs to the UDP-glycosyltransferase family. As to expression, expressed in flowers and fruits, especially in pulp, and, at lower levels, in seeds.

It localises to the cytoplasm. The protein localises to the nucleus. The catalysed reaction is 2-cis-(+)-abscisate + UDP-alpha-D-glucose = beta-D-glucopyranosyl cis-(+)-abscisate + UDP. It carries out the reaction (indol-3-yl)acetate + UDP-alpha-D-glucose = 1-O-(indol-3-ylacetyl)-beta-D-glucose + UDP. In terms of biological role, glucosyltransferase acting on both abscisic acid (ABA) and auxin (IAA). Required for ABA-mediated fruit ripening, seed germination, and negative responses to drought. The sequence is that of UDP-glycosyltransferase 75C1 from Solanum lycopersicum (Tomato).